A 786-amino-acid polypeptide reads, in one-letter code: ATP-dependent RNA helicase SUPV3L1, mitochondrial (786 aa).

A mitochondrion-targeting transit peptide spans methionine 1–alanine 22. Position 99 is an N6-acetyllysine (lysine 99). In terms of domain architecture, Helicase ATP-binding spans aspartate 194–tyrosine 334. Glycine 207 to threonine 214 contributes to the ATP binding site. Lysine 220 is subject to N6-acetyllysine. One can recognise a Helicase C-terminal domain in the interval valine 353 to glutamate 518. The segment at proline 650 to aspartate 786 is interaction with LAMTOR5, important for protein stability. Disordered regions lie at residues glycine 690–glutamate 730 and lysine 749–aspartate 786. Over residues serine 693–serine 705 the composition is skewed to polar residues. Serine 725 is modified (phosphoserine). Basic and acidic residues predominate over residues lysine 749–threonine 771.

It belongs to the helicase family. As to quaternary structure, homodimer; in free form. Component of the mitochondrial degradosome (mtEXO) complex which is a heteropentamer containing 2 copies of SUPV3L1 and 3 copies of PNPT1. As part of mitochondrial degradosome complex, interacts with GRSF1 in a RNA-dependent manner; the interaction enhances the activity of the complex. Interacts with LAMTOR5/HBXIP, WRN and BLM. The cofactor is Mg(2+). Mn(2+) serves as cofactor. Broadly expressed.

It localises to the nucleus. The protein localises to the mitochondrion matrix. Its subcellular location is the mitochondrion nucleoid. It catalyses the reaction ATP + H2O = ADP + phosphate + H(+). Helicase activity toward DNA substrate is inhibited by micromolar concentrations of 5,6-dichloro-1-(beta-D-ribofuranosyl)benzotriazole (DRBT) and 4,5,6,7-tetrabromobenzotriazole (TBBT). Helicase activity toward RNA substrate is inhibited by elevated concentrations of TBBT. Inhibited by some ring-expanded nucleoside analogs. Functionally, major helicase player in mitochondrial RNA metabolism. Component of the mitochondrial degradosome (mtEXO) complex, that degrades 3' overhang double-stranded RNA with a 3'-to-5' directionality in an ATP-dependent manner. Involved in the degradation of non-coding mitochondrial transcripts (MT-ncRNA) and tRNA-like molecules. ATPase and ATP-dependent multisubstrate helicase, able to unwind double-stranded (ds) DNA and RNA, and RNA/DNA heteroduplexes in the 5'-to-3' direction. Plays a role in the RNA surveillance system in mitochondria; regulates the stability of mature mRNAs, the removal of aberrantly formed mRNAs and the rapid degradation of non coding processing intermediates. Also implicated in recombination and chromatin maintenance pathways. May protect cells from apoptosis. Associates with mitochondrial DNA. This chain is ATP-dependent RNA helicase SUPV3L1, mitochondrial (SUPV3L1), found in Homo sapiens (Human).